The chain runs to 470 residues: MSHKSDLIATNIQKYLQQRQQKELLRFITCGSVDDGKSTLMGRLLHDSKLIFEDQLASIVADSKKVGTQGDRLDLALLVDGLQSEREQGITIDVAYRYFSTDKRKFIIADTPGHEQYTRNMATGASNCDLAIILIDARKGLQTQTRRHSFICSLLGIKHVIVAVNKMDTVGYSQQIYKSIQDEYLKLAGSLQIPDIRFVPISALDGDNVVSKSPKMPWFRGSPLMHYLETIKIDYAYTDEFRFPVQLVCRPNSEFRGFQGTIVSGSAKIGDTIRVMPSGKITTIKSILSFDGELNEAEAGQSITITTYDEIDISRGDMIVHKDAISHVSSMLRANIVWMSEQPLIEYKDYYIKFLTKQVIGSVNKFNYKTDINTLKEVACGTLELNEIATIELKLSEPVCFDSYQKNRTTGAFIIIDRLTNVTAGAGMVIKPLAANDKKDSTNDYSEFELELNALIRKHFPHWDAKNLRE.

A tr-type G domain is found at 22–238; it reads KELLRFITCG…ETIKIDYAYT (217 aa). The interval 31–38 is G1; sequence GSVDDGKS. GTP is bound at residue 31–38; it reads GSVDDGKS. The tract at residues 89–93 is G2; sequence GITID. Positions 110 to 113 are G3; it reads DTPG. Residues 110-114 and 165-168 each bind GTP; these read DTPGH and NKMD. The interval 165-168 is G4; it reads NKMD. The interval 202 to 204 is G5; that stretch reads SAL.

The protein belongs to the TRAFAC class translation factor GTPase superfamily. Classic translation factor GTPase family. CysN/NodQ subfamily. As to quaternary structure, heterodimer composed of CysD, the smaller subunit, and CysN.

It carries out the reaction sulfate + ATP + H(+) = adenosine 5'-phosphosulfate + diphosphate. Its pathway is sulfur metabolism; hydrogen sulfide biosynthesis; sulfite from sulfate: step 1/3. Its function is as follows. With CysD forms the ATP sulfurylase (ATPS) that catalyzes the adenylation of sulfate producing adenosine 5'-phosphosulfate (APS) and diphosphate, the first enzymatic step in sulfur assimilation pathway. APS synthesis involves the formation of a high-energy phosphoric-sulfuric acid anhydride bond driven by GTP hydrolysis by CysN coupled to ATP hydrolysis by CysD. The sequence is that of Sulfate adenylyltransferase subunit 1 from Francisella tularensis subsp. tularensis (strain WY96-3418).